The following is a 418-amino-acid chain: Transcription termination factor Rho (418 aa).

Residues 48–123 (DIYGDGVLEI…LKVNDINFDR (76 aa)) form the Rho RNA-BD domain. Residues 169–174 (GKGQRG), 181–186 (KAGKTM), and arginine 212 each bind ATP.

Belongs to the Rho family. Homohexamer. The homohexamer assembles into an open ring structure.

In terms of biological role, facilitates transcription termination by a mechanism that involves Rho binding to the nascent RNA, activation of Rho's RNA-dependent ATPase activity, and release of the mRNA from the DNA template. This Allochromatium vinosum (strain ATCC 17899 / DSM 180 / NBRC 103801 / NCIMB 10441 / D) (Chromatium vinosum) protein is Transcription termination factor Rho.